Here is a 521-residue protein sequence, read N- to C-terminus: Histone deacetylase HDAC1 (521 aa).

The interval 7-319 (KRVCYYYDSD…WTYETSVALA (313 aa)) is histone deacetylase. Residue H139 is part of the active site. A disordered region spans residues 376–521 (GVQIQAIPED…GAKGAKENNI (146 aa)). Acidic residues predominate over residues 386–395 (AINDESDDED). At S391 the chain carries Phosphoserine. Residues 396–414 (KVDKDDRLPQSDKDKRIVP) show a composition bias toward basic and acidic residues. Phosphoserine occurs at positions 419, 421, and 455. Residue T457 is modified to Phosphothreonine. Over residues 459 to 470 (SEIKDEKEKGDG) the composition is skewed to basic and acidic residues. The span at 476–502 (STASNTNSNNNSNNKSDNDAGATANAG) shows a compositional bias: low complexity. Over residues 503–513 (SGSGSGSGAGA) the composition is skewed to gly residues.

It belongs to the histone deacetylase family. HD type 1 subfamily. As to quaternary structure, component of a form of the Esc/E(z) complex present specifically during early embryogenesis which is composed of Caf1-55, esc, E(z), Su(z)12, Pcl and HDAC1. The Esc/E(z) complex may also associate with Pcl and HDAC1 during early embryogenesis. This complex is distinct from the PRC1 complex, which contains many other PcG proteins like Pc, Ph, Psc, Su(z)2. The 2 complexes however cooperate and interact together during the first 3 hours of development to establish PcG silencing. Interacts with the histone methyltransferase Su(var)3-9. Component of a complex that contains at least HDAC1, CoRest and Su(var)3-3/Hdm. Component of the DREAM complex at least composed of Myb, Caf1-55, mip40, mip120, mip130, E2f2, Dp, Rbf, Rbf2, lin-52, HDAC1 and l(3)mbt. Interacts with the chromatin-remodeler Mi-2. Interacts with Rrp6.

It localises to the nucleus. It catalyses the reaction N(6)-acetyl-L-lysyl-[histone] + H2O = L-lysyl-[histone] + acetate. Catalyzes the deacetylation of lysine residues on the N-terminal part of the core histones (H2A, H2B, H3 and H4). Histone deacetylation may constitute a tag for epigenetic repression and plays an important role in transcriptional regulation, cell cycle progression and developmental events. For instance, deacetylation of histone H3 may be a prerequisite for the subsequent recruitment of the histone methyltransferase Su(var)3-9 to histones. Involved in position-effect variegation (PEV). In the larval brain, part of a regulatory network including the transcriptional repressors klu, dpn and E(spl)mgamma-HLH which is required for type II neuroblast self-renewal and for maintaining erm in an inactive state in intermediate neural progenitors (INP). This Drosophila melanogaster (Fruit fly) protein is Histone deacetylase HDAC1.